The sequence spans 396 residues: Elongation factor Tu (396 aa).

Residues 10 to 206 (KEHVNIGTIG…AVDTWIETPV (197 aa)) enclose the tr-type G domain. The G1 stretch occupies residues 19–26 (GHVDHGKT). A GTP-binding site is contributed by 19–26 (GHVDHGKT). A Mg(2+)-binding site is contributed by Thr-26. The interval 60 to 64 (GITIN) is G2. Residues 81 to 84 (DCPG) form a G3 region. Residues 81-85 (DCPGH) and 136-139 (NKCD) each bind GTP. The interval 136–139 (NKCD) is G4. The interval 176 to 178 (SAL) is G5.

Belongs to the TRAFAC class translation factor GTPase superfamily. Classic translation factor GTPase family. EF-Tu/EF-1A subfamily. Monomer.

It localises to the cytoplasm. It catalyses the reaction GTP + H2O = GDP + phosphate + H(+). Its function is as follows. GTP hydrolase that promotes the GTP-dependent binding of aminoacyl-tRNA to the A-site of ribosomes during protein biosynthesis. The protein is Elongation factor Tu of Mycoplasmopsis agalactiae (strain NCTC 10123 / CIP 59.7 / PG2) (Mycoplasma agalactiae).